The following is a 516-amino-acid chain: Rho guanine nucleotide exchange factor 9 (516 aa).

The SH3 domain occupies 8 to 67; that stretch reads DSIVSAEAVWDHVTMANRELAFKAGDVIKVLDASNKDWWWGQIDDEEGWFPASFVRLWVN. The segment at 100–110 is interaction with GPHN; it reads RDQMRANVINE. Residues 103-287 enclose the DH domain; the sequence is MRANVINEIM…RNVTQQINER (185 aa). Positions 318–425 constitute a PH domain; it reads ELIYTGEMAW…WLRAFREERK (108 aa). A disordered region spans residues 453-480; that stretch reads PKQKGVNSARSVPPSYPPPQDPLNHGQY. At Ser502 the chain carries Phosphoserine.

Interacts with GPHN. In terms of tissue distribution, detected in brain. Detected at low levels in heart.

The protein localises to the cytoplasm. The protein resides in the postsynaptic density. In terms of biological role, acts as a guanine nucleotide exchange factor (GEF) for CDC42. Promotes formation of GPHN clusters. The sequence is that of Rho guanine nucleotide exchange factor 9 (ARHGEF9) from Homo sapiens (Human).